Consider the following 349-residue polypeptide: tRNA pseudouridine synthase D (349 aa).

Phe-27 is a substrate binding site. The Nucleophile role is filled by Asp-80. Position 129 (Asn-129) interacts with substrate. The region spanning 155–303 (GVPNYFGAQR…VEAARRAMLL (149 aa)) is the TRUD domain. Phe-329 is a substrate binding site.

This sequence belongs to the pseudouridine synthase TruD family.

It carries out the reaction uridine(13) in tRNA = pseudouridine(13) in tRNA. Responsible for synthesis of pseudouridine from uracil-13 in transfer RNAs. The chain is tRNA pseudouridine synthase D from Escherichia coli (strain 55989 / EAEC).